The sequence spans 108 residues: Nucleoid-associated protein PSPTO_3645 (108 aa).

Residues Gln-85–Ala-96 show a composition bias toward polar residues. Positions Gln-85–Phe-108 are disordered.

This sequence belongs to the YbaB/EbfC family. As to quaternary structure, homodimer.

It is found in the cytoplasm. The protein localises to the nucleoid. Its function is as follows. Binds to DNA and alters its conformation. May be involved in regulation of gene expression, nucleoid organization and DNA protection. This chain is Nucleoid-associated protein PSPTO_3645, found in Pseudomonas syringae pv. tomato (strain ATCC BAA-871 / DC3000).